A 253-amino-acid chain; its full sequence is Phycoerythrobilin:ferredoxin oxidoreductase (253 aa).

The protein belongs to the HY2 family.

The enzyme catalyses (3Z)-phycoerythrobilin + oxidized 2[4Fe-4S]-[ferredoxin] = 15,16-dihydrobiliverdin + reduced 2[4Fe-4S]-[ferredoxin] + 2 H(+). Its function is as follows. Catalyzes the two-electron reduction of the C2 and C3(1) diene system of 15,16-dihydrobiliverdin. This chain is Phycoerythrobilin:ferredoxin oxidoreductase (pebB), found in Prochlorococcus marinus (strain MIT 9215).